A 213-amino-acid polypeptide reads, in one-letter code: Glycerol-3-phosphate acyltransferase (213 aa).

The next 6 helical transmembrane spans lie at 2–22 (ITIV…GLWI), 54–74 (MATF…PIMF), 80–100 (SPLI…FAGF), 110–130 (AGVV…VFFG), 143–163 (VTAS…GFIL), and 165–185 (NYDP…IIRH).

It belongs to the PlsY family. Probably interacts with PlsX.

It is found in the cell membrane. The catalysed reaction is an acyl phosphate + sn-glycerol 3-phosphate = a 1-acyl-sn-glycero-3-phosphate + phosphate. It functions in the pathway lipid metabolism; phospholipid metabolism. Catalyzes the transfer of an acyl group from acyl-phosphate (acyl-PO(4)) to glycerol-3-phosphate (G3P) to form lysophosphatidic acid (LPA). This enzyme utilizes acyl-phosphate as fatty acyl donor, but not acyl-CoA or acyl-ACP. This chain is Glycerol-3-phosphate acyltransferase, found in Streptococcus pneumoniae (strain Taiwan19F-14).